Here is a 376-residue protein sequence, read N- to C-terminus: Heat-inducible transcription repressor HrcA (376 aa).

This sequence belongs to the HrcA family.

Functionally, negative regulator of class I heat shock genes (grpE-dnaK-dnaJ and groELS operons). Prevents heat-shock induction of these operons. In Nostoc punctiforme (strain ATCC 29133 / PCC 73102), this protein is Heat-inducible transcription repressor HrcA.